The chain runs to 276 residues: D-aminoacyl-tRNA deacylase (276 aa).

It belongs to the DtdA deacylase family. In terms of assembly, monomer. Zn(2+) serves as cofactor.

It catalyses the reaction a D-aminoacyl-tRNA + H2O = a tRNA + a D-alpha-amino acid + H(+). It carries out the reaction glycyl-tRNA(Ala) + H2O = tRNA(Ala) + glycine + H(+). D-aminoacyl-tRNA deacylase with broad substrate specificity. By recycling D-aminoacyl-tRNA to D-amino acids and free tRNA molecules, this enzyme counteracts the toxicity associated with the formation of D-aminoacyl-tRNA entities in vivo. The chain is D-aminoacyl-tRNA deacylase from Korarchaeum cryptofilum (strain OPF8).